A 641-amino-acid chain; its full sequence is PWWP domain-containing DNA repair factor 3A (641 aa).

The interval 98–329 is disordered; it reads LNERQGSSSR…LEEDEDDEEP (232 aa). Phosphoserine is present on Ser-156. 2 stretches are compositionally biased toward basic and acidic residues: residues 194–203 and 295–307; these read QDREASRKQQ and ADTR…RPLS. Ser-307 is modified (phosphoserine). Residues 343–404 form the PWWP domain; the sequence is VGMLVWHKYQ…KHFDCKEKQA (62 aa). Residues 463–486 form a disordered region; that stretch reads TRFPQLSGGDPEEPVAGSPQGRRP.

It belongs to the PWWP3A family. Interacts with TP53BP1 (via BRCT domain); the interaction is not dependent on its phosphorylation status. Binds nucleosomes. Interacts with trimethylated 'Lys-36' of histone H3 (H3K36me3) (in vitro).

Its subcellular location is the nucleus. Functionally, involved in the DNA damage response pathway by contributing to the maintenance of chromatin architecture. Recruited to the vicinity of DNA breaks by TP53BP1 and plays an accessory role to facilitate damage-induced chromatin changes and promoting chromatin relaxation. Required for efficient DNA repair and cell survival following DNA damage. The chain is PWWP domain-containing DNA repair factor 3A (PWWP3A) from Bos taurus (Bovine).